The following is a 222-amino-acid chain: Eukaryotic translation initiation factor 4E-2 (222 aa).

Residues 1–20 are compositionally biased toward basic and acidic residues; it reads MVDEVEKPVSLEESKTNTRE. The interval 1–35 is disordered; that stretch reads MVDEVEKPVSLEESKTNTREVEEEGEIVGESDDTM. The span at 21 to 33 shows a compositional bias: acidic residues; the sequence is VEEEGEIVGESDD. EIF4G-binding stretches follow at residues 47 to 50 and 57 to 93; these read HALE and FDNPSGKSKQAAWGSSIRPIYTFSTVEDFWSVYNNIH. MRNA is bound by residues 65–70, Lys-97, and 115–116; these read KQAAWG and WE. The cysteines at positions 120 and 158 are disulfide-linked. The segment at 141-150 is EIF4G-binding; sequence YTLLAMIGEQ. Residues 165–170 and 210–214 contribute to the mRNA site; these read RVRQEK and KKLDR.

Belongs to the eukaryotic initiation factor 4E family. As to quaternary structure, EIF4F is a multi-subunit complex, the composition of which varies with external and internal environmental conditions. It is composed of at least EIF4A, EIF4E and EIF4G. EIF4E is also known to interact with other partners. In higher plants two isoforms of EIF4F have been identified, named isoform EIF4F and isoform EIF(iso)4F. Isoform EIF4F has subunits p220 and p26, whereas isoform EIF(iso)4F has subunits p82 and p28. (Microbial infection) Interacts with potyvirus viral genome-linked protein (VPg); this interaction is possible in susceptible hosts but impaired in resistant plants. Post-translationally, according to the redox status, the Cys-120-Cys-158 disulfide bridge may have a role in regulating protein function by affecting its ability to bind capped mRNA. In terms of tissue distribution, strongly expressed in susceptible plants but not in resistant ones.

The protein resides in the nucleus. Its subcellular location is the cytoplasm. In terms of biological role, component of the protein complex eIF4F, which is involved in the recognition of the mRNA cap, ATP-dependent unwinding of 5'-terminal secondary structure and recruitment of mRNA to the ribosome. Recognizes and binds the 7-methylguanosine-containing mRNA cap during an early step in the initiation of protein synthesis and facilitates ribosome binding by inducing the unwinding of the mRNAs secondary structures. Key component of recessive resistance to potyviruses. Functionally, (Microbial infection) Susceptibility host factor required for viral infection (e.g. potato virus Y (PVY) and pepper mottle virus (PepMoV)) by recruiting viral RNAs to the host ribosomal complex via an interaction with viral genome-linked protein (VPg). This is Eukaryotic translation initiation factor 4E-2 from Nicotiana tabacum (Common tobacco).